Reading from the N-terminus, the 380-residue chain is Pectin lyase (380 aa).

A signal peptide spans 1 to 20; the sequence is MRSASILSAALAAFAPLASA. Asparagine 130 is a glycosylation site (N-linked (GlcNAc...) asparagine).

This sequence belongs to the polysaccharide lyase 1 family.

The protein localises to the secreted. The catalysed reaction is Eliminative cleavage of (1-&gt;4)-alpha-D-galacturonan methyl ester to give oligosaccharides with 4-deoxy-6-O-methyl-alpha-D-galact-4-enuronosyl groups at their non-reducing ends.. In Colletotrichum gloeosporioides (Anthracnose fungus), this protein is Pectin lyase (PNLA).